The following is a 681-amino-acid chain: Glutamine--fructose-6-phosphate aminotransferase [isomerizing] 1 (681 aa).

Cys-2 serves as the catalytic For GATase activity. The region spanning 2–287 is the Glutamine amidotransferase type-2 domain; it reads CGIFAYLNYH…DDDVAAVVDG (286 aa). Phosphoserine occurs at positions 103 and 243. Positions 295–662 are isomerase; sequence KRTARDHPGR…LQLLAFHLAV (368 aa). SIS domains follow at residues 359-498 and 530-671; these read HIKE…DRIS and LATE…VDFP. Residues 376–377, 421–423, Thr-426, and His-577 each bind substrate; these read TS and SQS.

As to quaternary structure, homotetramer, may also exist as homodimers.

The enzyme catalyses D-fructose 6-phosphate + L-glutamine = D-glucosamine 6-phosphate + L-glutamate. It functions in the pathway nucleotide-sugar biosynthesis; UDP-N-acetyl-alpha-D-glucosamine biosynthesis; alpha-D-glucosamine 6-phosphate from D-fructose 6-phosphate: step 1/1. Its activity is regulated as follows. Inhibited by 4,4'-dithiodipyridine. In terms of biological role, controls the flux of glucose into the hexosamine pathway. Most likely involved in regulating the availability of precursors for N- and O-linked glycosylation of proteins. Regulates the circadian expression of clock genes BMAL1 and CRY1. Has a role in fine tuning the metabolic fluctuations of cytosolic UDP-GlcNAc and its effects on hyaluronan synthesis that occur during tissue remodeling. The protein is Glutamine--fructose-6-phosphate aminotransferase [isomerizing] 1 (Gfpt1) of Rattus norvegicus (Rat).